We begin with the raw amino-acid sequence, 537 residues long: MPHLMERMVGSGLLWLALVSCILTQASAVQRGYGNPIEASSYGLDLDCGAPGTPEAHVCFDPCQNYTLLDEPFRSTENSAGSQGCDKNMSGWYRFVGEGGVRMSETCVQVHRCQTDAPMWLNGTHPALGDGITNHTACAHWSGNCCFWKTEVLVKACPGGYHVYRLEGTPWCNLRYCTVPRDPSTVEDKCEKACRPEEECLALNSTWGCFCRQDLNSSDVHSLQPQLDCGPREIKVKVDKCLLGGLGLGEEVIAYLRDPNCSSILQTEERNWVSVTSPVQASACRNILERNQTHAIYKNTLSLVNDFIIRDTILNINFQCAYPLDMKVSLQAALQPIVSSLNVSVDGNGEFIVRMALFQDQNYTNPYEGDAVELSVESVLYVGAILEQGDTSRFNLVLRNCYATPTEDKADLVKYFIIRNSCSNQRDSTIHVEENGQSSESRFSVQMFMFAGHYDLVFLHCEIHLCDSLNEQCQPSCSRSQVRSEVPAIDLARVLDLGPITRRGAQSPGVMNGTPSTAGFLVAWPMVLLTVLLAWLF.

The N-terminal stretch at 1–28 (MPHLMERMVGSGLLWLALVSCILTQASA) is a signal peptide. The interval 41 to 60 (SYGLDLDCGAPGTPEAHVCF) is beta hairpin. 11 disulfide bridges follow: Cys-48-Cys-59, Cys-63-Cys-157, Cys-85-Cys-172, Cys-107-Cys-145, Cys-113-Cys-177, Cys-138-Cys-146, Cys-190-Cys-200, Cys-194-Cys-209, Cys-211-Cys-241, Cys-229-Cys-320, and Cys-261-Cys-284. Positions 61–81 (DPCQNYTLLDEPFRSTENSAG) are D10C. Asn-65 carries an N-linked (GlcNAc...) (high mannose) asparagine glycan. N-linked (GlcNAc...) asparagine glycans are attached at residues Asn-88, Asn-122, and Asn-134. An EGF-like domain is found at 186 to 230 (VEDKCEKACRPEEECLALNSTWGCFCRQDLNSSDVHSLQPQLDCG). Residues Asn-204, Asn-216, and Asn-260 are each glycosylated (N-linked (GlcNAc...) asparagine). The segment at 228–321 (DCGPREIKVK…TILNINFQCA (94 aa)) is ZP-N. The region spanning 228–484 (DCGPREIKVK…PSCSRSQVRS (257 aa)) is the ZP domain. Asn-291 and Asn-342 each carry an N-linked (GlcNAc...) asparagine glycan. A flexible ZP-N/ZP-C linker region spans residues 322-345 (YPLDMKVSLQAALQPIVSSLNVSV). The interval 346–357 (DGNGEFIVRMAL) is internal hydrophobic patch (IHP). The interval 346-484 (DGNGEFIVRM…PSCSRSQVRS (139 aa)) is ZP-C. Residue Asn-362 is glycosylated (N-linked (GlcNAc...) asparagine). 3 cysteine pairs are disulfide-bonded: Cys-401–Cys-461, Cys-422–Cys-477, and Cys-466–Cys-473. An external hydrophobic patch (EHP) region spans residues 491-499 (LARVLDLGP). Residue Asn-512 is the site of GPI-anchor amidated asparagine attachment. A propeptide spans 513 to 537 (GTPSTAGFLVAWPMVLLTVLLAWLF) (removed in mature form).

In terms of assembly, interacts with SYCN. Interacts with bacterial adhesin fimH. Post-translationally, N-glycosylated. Glycosylated Asn-65 may be required for interaction with bacterial adhesin fimH. Expressed in pancreas (at protein level). Specifically expressed by M (microfold) cells which are atypical epithelial cells of the intestine (at protein level).

It is found in the zymogen granule membrane. The protein resides in the secreted. It localises to the cell membrane. Its subcellular location is the apical cell membrane. The protein localises to the membrane raft. It is found in the endosome. Functionally, functions as an intestinal M-cell transcytotic receptor specific for type-I-piliated bacteria that participates in the mucosal immune response toward these bacteria. At the apical membrane of M-cells it binds fimH, a protein of the bacteria type I pilus tip. Internalizes bound bacteria, like E.coli and S.typhimurium, from the lumen of the intestine and delivers them, through M-cells, to the underlying organized lymphoid follicles where they are captured by antigen-presenting dendritic cells to elicit a mucosal immune response. This Homo sapiens (Human) protein is Pancreatic secretory granule membrane major glycoprotein GP2.